Here is a 338-residue protein sequence, read N- to C-terminus: 1-aminocyclopropane-1-carboxylate deaminase (338 aa).

Lys-51 carries the post-translational modification N6-(pyridoxal phosphate)lysine. Residue Ser-78 is the Nucleophile of the active site.

The protein belongs to the ACC deaminase/D-cysteine desulfhydrase family. Homotrimer. Pyridoxal 5'-phosphate serves as cofactor.

The enzyme catalyses 1-aminocyclopropane-1-carboxylate + H2O = 2-oxobutanoate + NH4(+). Functionally, catalyzes a cyclopropane ring-opening reaction, the irreversible conversion of 1-aminocyclopropane-1-carboxylate (ACC) to ammonia and alpha-ketobutyrate. Allows growth on ACC as a nitrogen source. This chain is 1-aminocyclopropane-1-carboxylate deaminase, found in Pseudomonas putida (Arthrobacter siderocapsulatus).